The chain runs to 279 residues: Aspartate/glutamate leucyltransferase (279 aa).

The interval 245–279 (ARERGARPPRGPGALKDACDLPLSDAQPADIEDLD) is disordered.

The protein belongs to the R-transferase family. Bpt subfamily.

The protein resides in the cytoplasm. It catalyses the reaction N-terminal L-glutamyl-[protein] + L-leucyl-tRNA(Leu) = N-terminal L-leucyl-L-glutamyl-[protein] + tRNA(Leu) + H(+). The catalysed reaction is N-terminal L-aspartyl-[protein] + L-leucyl-tRNA(Leu) = N-terminal L-leucyl-L-aspartyl-[protein] + tRNA(Leu) + H(+). Functionally, functions in the N-end rule pathway of protein degradation where it conjugates Leu from its aminoacyl-tRNA to the N-termini of proteins containing an N-terminal aspartate or glutamate. This is Aspartate/glutamate leucyltransferase from Caulobacter vibrioides (strain ATCC 19089 / CIP 103742 / CB 15) (Caulobacter crescentus).